A 336-amino-acid chain; its full sequence is UDP-3-O-acylglucosamine N-acyltransferase (336 aa).

His233 acts as the Proton acceptor in catalysis.

It belongs to the transferase hexapeptide repeat family. LpxD subfamily. As to quaternary structure, homotrimer.

It carries out the reaction a UDP-3-O-[(3R)-3-hydroxyacyl]-alpha-D-glucosamine + a (3R)-hydroxyacyl-[ACP] = a UDP-2-N,3-O-bis[(3R)-3-hydroxyacyl]-alpha-D-glucosamine + holo-[ACP] + H(+). The protein operates within bacterial outer membrane biogenesis; LPS lipid A biosynthesis. In terms of biological role, catalyzes the N-acylation of UDP-3-O-acylglucosamine using 3-hydroxyacyl-ACP as the acyl donor. Is involved in the biosynthesis of lipid A, a phosphorylated glycolipid that anchors the lipopolysaccharide to the outer membrane of the cell. The protein is UDP-3-O-acylglucosamine N-acyltransferase of Helicobacter pylori (strain ATCC 700392 / 26695) (Campylobacter pylori).